The chain runs to 259 residues: Chymotrypsin-1 (259 aa).

The signal sequence occupies residues 1-17 (MLRKVFAVVSVLLVVSA). The propeptide at 18–32 (AKVTKLVLDDNYVNR) is activation peptide. Residues 33-255 (VVGGEVAKNG…YHDWVRTTMA (223 aa)) enclose the Peptidase S1 domain. Cys-59 and Cys-75 are oxidised to a cystine. Catalysis depends on charge relay system residues His-74 and Asp-119. 2 disulfides stabilise this stretch: Cys-182–Cys-198 and Cys-208–Cys-232. Ser-212 acts as the Charge relay system in catalysis.

It belongs to the peptidase S1 family. In terms of tissue distribution, after blood feeding, expression is induced in the midgut epithelium, followed by secretion into the midgut lumen.

It localises to the secreted. It carries out the reaction Preferential cleavage: Tyr-|-Xaa, Trp-|-Xaa, Phe-|-Xaa, Leu-|-Xaa.. This Anopheles gambiae (African malaria mosquito) protein is Chymotrypsin-1 (CHYM1).